Consider the following 339-residue polypeptide: Transmembrane protein 120B (339 aa).

Residues 1-77 (MSGQLERCER…ASREEAELVQ (77 aa)) adopt a coiled-coil conformation. Helical transmembrane passes span 102–124 (GLYL…AKFA), 132–152 (FKLY…FFLH), 159–179 (VFNF…SILI), 187–207 (GWWV…LTWP), 270–290 (FLLP…VTLF), and 302–322 (QVFV…LTTL).

The protein belongs to the TMEM120 family. As to quaternary structure, heterooligomer with TMEM120A.

It is found in the nucleus inner membrane. Necessary for efficient adipogenesis. Does not show ion channel activity. The polypeptide is Transmembrane protein 120B (TMEM120B) (Bos taurus (Bovine)).